Here is a 420-residue protein sequence, read N- to C-terminus: 3-phosphoshikimate 1-carboxyvinyltransferase (420 aa).

Positions 20, 21, and 25 each coordinate 3-phosphoshikimate. Phosphoenolpyruvate is bound at residue Lys20. Arg119 provides a ligand contact to phosphoenolpyruvate. 7 residues coordinate 3-phosphoshikimate: Ser161, Ser162, Gln163, Ser189, Asp303, Gln326, and Lys330. Position 163 (Gln163) interacts with phosphoenolpyruvate. Asp303 acts as the Proton acceptor in catalysis. 3 residues coordinate phosphoenolpyruvate: Arg334, Arg375, and Lys400.

It belongs to the EPSP synthase family. As to quaternary structure, monomer.

It localises to the cytoplasm. The enzyme catalyses 3-phosphoshikimate + phosphoenolpyruvate = 5-O-(1-carboxyvinyl)-3-phosphoshikimate + phosphate. It participates in metabolic intermediate biosynthesis; chorismate biosynthesis; chorismate from D-erythrose 4-phosphate and phosphoenolpyruvate: step 6/7. Its function is as follows. Catalyzes the transfer of the enolpyruvyl moiety of phosphoenolpyruvate (PEP) to the 5-hydroxyl of shikimate-3-phosphate (S3P) to produce enolpyruvyl shikimate-3-phosphate and inorganic phosphate. The sequence is that of 3-phosphoshikimate 1-carboxyvinyltransferase from Dehalococcoides mccartyi (strain ATCC BAA-2100 / JCM 16839 / KCTC 5957 / BAV1).